A 257-amino-acid polypeptide reads, in one-letter code: Snake venom serine protease serpentokallikrein-2 (257 aa).

The N-terminal stretch at 1–18 is a signal peptide; sequence MVLIRVLANLLILQLSYA. The propeptide occupies 19 to 24; the sequence is QKSSEL. In terms of domain architecture, Peptidase S1 spans 25-248; it reads VIGGDECNIN…HLDWIKGIIA (224 aa). 6 disulfide bridges follow: cysteine 31-cysteine 162, cysteine 49-cysteine 65, cysteine 97-cysteine 255, cysteine 141-cysteine 209, cysteine 173-cysteine 188, and cysteine 199-cysteine 224. The active-site Charge relay system is histidine 64. An N-linked (GlcNAc...) asparagine glycan is attached at asparagine 102. Aspartate 109 (charge relay system) is an active-site residue. Residue serine 203 is the Charge relay system of the active site.

The protein belongs to the peptidase S1 family. Snake venom subfamily. Monomer. Expressed by the venom gland.

The protein localises to the secreted. Snake venom serine protease that may act in the hemostasis system of the prey. This is Snake venom serine protease serpentokallikrein-2 from Protobothrops mucrosquamatus (Taiwan habu).